The sequence spans 56 residues: Small ribosomal subunit protein uS14 (56 aa).

The residue at position 9 (Ser9) is a Phosphoserine. At Arg12 the chain carries Omega-N-methylarginine. Zn(2+)-binding residues include Cys21, Cys24, Cys39, and Cys42. N6-acetyllysine is present on Lys48.

The protein belongs to the universal ribosomal protein uS14 family. Component of the 40S small ribosomal subunit. Requires Zn(2+) as cofactor.

It is found in the cytoplasm. The protein localises to the cytosol. Its subcellular location is the rough endoplasmic reticulum. Its function is as follows. Component of the small ribosomal subunit. The ribosome is a large ribonucleoprotein complex responsible for the synthesis of proteins in the cell. This Sus scrofa (Pig) protein is Small ribosomal subunit protein uS14 (RPS29).